A 320-amino-acid chain; its full sequence is Phosphatidylserine decarboxylase proenzyme (320 aa).

Residues aspartate 90, histidine 147, and serine 254 each act as charge relay system; for autoendoproteolytic cleavage activity in the active site. Serine 254 functions as the Schiff-base intermediate with substrate; via pyruvic acid; for decarboxylase activity in the catalytic mechanism. A Pyruvic acid (Ser); by autocatalysis modification is found at serine 254. A disordered region spans residues 290-320; sequence TAAAEPAPLPEEEIRAEHRASPLVDDKQDQG. Over residues 301-320 the composition is skewed to basic and acidic residues; the sequence is EEIRAEHRASPLVDDKQDQG.

It belongs to the phosphatidylserine decarboxylase family. PSD-B subfamily. Prokaryotic type I sub-subfamily. Heterodimer of a large membrane-associated beta subunit and a small pyruvoyl-containing alpha subunit. Pyruvate is required as a cofactor. Is synthesized initially as an inactive proenzyme. Formation of the active enzyme involves a self-maturation process in which the active site pyruvoyl group is generated from an internal serine residue via an autocatalytic post-translational modification. Two non-identical subunits are generated from the proenzyme in this reaction, and the pyruvate is formed at the N-terminus of the alpha chain, which is derived from the carboxyl end of the proenzyme. The autoendoproteolytic cleavage occurs by a canonical serine protease mechanism, in which the side chain hydroxyl group of the serine supplies its oxygen atom to form the C-terminus of the beta chain, while the remainder of the serine residue undergoes an oxidative deamination to produce ammonia and the pyruvoyl prosthetic group on the alpha chain. During this reaction, the Ser that is part of the protease active site of the proenzyme becomes the pyruvoyl prosthetic group, which constitutes an essential element of the active site of the mature decarboxylase.

It localises to the cell membrane. The enzyme catalyses a 1,2-diacyl-sn-glycero-3-phospho-L-serine + H(+) = a 1,2-diacyl-sn-glycero-3-phosphoethanolamine + CO2. The protein operates within phospholipid metabolism; phosphatidylethanolamine biosynthesis; phosphatidylethanolamine from CDP-diacylglycerol: step 2/2. Catalyzes the formation of phosphatidylethanolamine (PtdEtn) from phosphatidylserine (PtdSer). The sequence is that of Phosphatidylserine decarboxylase proenzyme from Klebsiella pneumoniae subsp. pneumoniae (strain ATCC 700721 / MGH 78578).